We begin with the raw amino-acid sequence, 300 residues long: 11-beta-hydroxysteroid dehydrogenase 1 (300 aa).

Over 1 to 7 the chain is Cytoplasmic; sequence MAFLKKY. Residues 8–24 traverse the membrane as a helical; Signal-anchor for type II membrane protein segment; sequence LLTILMVFLAYYYYSAN. At 25–300 the chain is on the lumenal side; sequence EKFRPEMLQG…SNEKLYGRWA (276 aa). NADP(+) contacts are provided by residues 41-67, 92-93, and 119-123; these read GASKGIGREIAYHLAKMGAHVVVTARS, SM, and NHVLY. Serine 170 is a substrate binding site. Residue tyrosine 183 is the Proton acceptor of the active site. An NADP(+)-binding site is contributed by 183 to 187; that stretch reads YSASK. Asparagine 207 carries N-linked (GlcNAc...) asparagine glycosylation. 218–222 contributes to the NADP(+) binding site; that stretch reads IDTET.

It belongs to the short-chain dehydrogenases/reductases (SDR) family. As to quaternary structure, homodimer. In terms of tissue distribution, widely expressed in all peripheral tissues, with highest expression in liver, followed by kidney and lung, and very low expression in heart, lung, spleen, stomach, small intestine, colon, skin, skeletal muscle, and ovary.

It localises to the endoplasmic reticulum membrane. It carries out the reaction an 11beta-hydroxysteroid + NADP(+) = an 11-oxosteroid + NADPH + H(+). It catalyses the reaction cortisone + NADPH + H(+) = cortisol + NADP(+). The enzyme catalyses corticosterone + NADP(+) = 11-dehydrocorticosterone + NADPH + H(+). The catalysed reaction is a 7beta-hydroxysteroid + NADP(+) = a 7-oxosteroid + NADPH + H(+). It carries out the reaction 7-oxocholesterol + NADPH + H(+) = 7beta-hydroxycholesterol + NADP(+). It catalyses the reaction chenodeoxycholate + NADP(+) = 7-oxolithocholate + NADPH + H(+). The enzyme catalyses 7-oxolithocholate + NADPH + H(+) = ursodeoxycholate + NADP(+). The catalysed reaction is glycochenodeoxycholate + NADP(+) = 7-oxoglycolithocholate + NADPH + H(+). It carries out the reaction taurochenodeoxycholate + NADP(+) = 7-oxotaurolithocholate + NADPH + H(+). It catalyses the reaction tauroursodeoxycholate + NADP(+) = 7-oxotaurolithocholate + NADPH + H(+). The enzyme catalyses glycoursodeoxycholate + NADP(+) = 7-oxoglycolithocholate + NADPH + H(+). The catalysed reaction is 7-oxopregnenolone + NADPH + H(+) = 7beta-hydroxypregnenolone + NADP(+). It carries out the reaction 3beta,7alpha-dihydroxyandrost-5-en-17-one + NADP(+) = 3beta-hydroxy-5-androstene-7,17-dione + NADPH + H(+). It catalyses the reaction 3beta-hydroxy-5-androstene-7,17-dione + NADPH + H(+) = 3beta,7beta-dihydroxyandrost-5-en-17-one + NADP(+). The enzyme catalyses 3beta-hydroxy-5alpha-androstane-7,17-dione + NADPH + H(+) = 3beta,7beta-dihydroxy-5alpha-androstan-17-one + NADP(+). Functionally, controls the reversible conversion of biologically active glucocorticoids such as cortisone to cortisol, and 11-dehydrocorticosterone to corticosterone in the presence of NADP(H). Participates in the corticosteroid receptor-mediated anti-inflammatory response, as well as metabolic and homeostatic processes. Bidirectional in vitro, predominantly functions as a reductase in vivo, thereby increasing the concentration of active glucocorticoids. It has broad substrate specificity, besides glucocorticoids, it accepts other steroid and sterol substrates. Interconverts 7-oxo- and 7-hydroxy-neurosteroids such as 7-oxopregnenolone and 7beta-hydroxypregnenolone, 7-oxodehydroepiandrosterone (3beta-hydroxy-5-androstene-7,17-dione) and 7beta-hydroxydehydroepiandrosterone (3beta,7beta-dihydroxyandrost-5-en-17-one), among others. Catalyzes the stereo-specific conversion of the major dietary oxysterol, 7-ketocholesterol (7-oxocholesterol), into the more polar 7-beta-hydroxycholesterol metabolite. 7-oxocholesterol is one of the most important oxysterols, it participates in several events such as induction of apoptosis, accumulation in atherosclerotic lesions, lipid peroxidation, and induction of foam cell formation. Mediates the 7-oxo reduction of 7-oxolithocholate mainly to chenodeoxycholate, and to a lesser extent to ursodeoxycholate, both in its free form and when conjugated to glycine or taurine, providing a link between glucocorticoid activation and bile acid metabolism. Catalyzes the synthesis of 7-beta-25-dihydroxycholesterol from 7-oxo-25-hydroxycholesterol in vitro, which acts as a ligand for the G-protein-coupled receptor (GPCR) Epstein-Barr virus-induced gene 2 (EBI2) and may thereby regulate immune cell migration. The chain is 11-beta-hydroxysteroid dehydrogenase 1 (HSD11B1) from Cavia porcellus (Guinea pig).